Reading from the N-terminus, the 357-residue chain is Dihydroorotate dehydrogenase (quinone) (357 aa).

FMN is bound by residues 66–70 (AGFDK) and Thr90. Lys70 lines the substrate pocket. 115–119 (NRMGF) is a substrate binding site. Positions 143 and 176 each coordinate FMN. A substrate-binding site is contributed by Asn176. Ser179 acts as the Nucleophile in catalysis. Asn181 contacts substrate. Positions 212 and 240 each coordinate FMN. 241 to 242 (NT) provides a ligand contact to substrate. FMN-binding positions include Gly264, Gly293, and 314–315 (YT).

It belongs to the dihydroorotate dehydrogenase family. Type 2 subfamily. In terms of assembly, monomer. FMN serves as cofactor.

The protein localises to the cell membrane. The catalysed reaction is (S)-dihydroorotate + a quinone = orotate + a quinol. The protein operates within pyrimidine metabolism; UMP biosynthesis via de novo pathway; orotate from (S)-dihydroorotate (quinone route): step 1/1. Its function is as follows. Catalyzes the conversion of dihydroorotate to orotate with quinone as electron acceptor. This is Dihydroorotate dehydrogenase (quinone) from Mycobacterium tuberculosis (strain ATCC 25177 / H37Ra).